The sequence spans 729 residues: MRSKAKGLVRPLITKPVQPLSSHMHLFLLCILFLSALFLTLSEAVCNLQDRESLIWFSGNVSSSVSPLNWNLSIDCCSWEGITCDDSSDSHVTVISLPSRGLSGTLASSVQNIHRLSRLDLSYNRLSGPLPPGFFSTLDQLMILNLSYNSFNGELPLEQAFGNESNRFFSIQTLDLSSNLLEGEILRSSVYLQGTINLISFNVSNNSFTGPIPSFMCRSSPQLSKLDFSYNDFSGHISQELGRCLRLTVLQAGFNNLSGVIPSEIYNLSELEQLFLPANQLTGKIDNNITRLRKLTSLALYSNHLEGEIPMDIGNLSSLRSLQLHINNINGTVPLSLANCTKLVKLNLRVNQLGGGLTELEFSQLQSLKVLDLGNNSFTGALPDKIFSCKSLTAIRFAGNKLTGEISPQVLELESLSFMGLSDNKLTNITGALSILQGCRKLSTLILAKNFYDETVPSKEDFLSPDGFPKLRIFGVGACRLRGEIPAWLINLNKVEVMDLSMNRFVGSIPGWLGTLPDLFYLDLSDNLLTGELPKELFQLRALMSQKITENNYLELPIFLNPNNVTTNQQYNKLYSFPPTIYIRRNNLTGSIPVEVGQLKVLHILELLGNNLSGSIPDELSNLTNLERLDLSNNNLSGSIPWSLTNLNFLSYFNVANNSLEGPIPSEGQFDTFPKANFEGNPLLCGGVLLTSCKPTRAKENDELNRTFLMGIAIGYFLSFVSILVVRAW.

A signal peptide spans 1–44 (MRSKAKGLVRPLITKPVQPLSSHMHLFLLCILFLSALFLTLSEA). The segment at 45-82 (VCNLQDRESLIWFSGNVSSSVSPLNWNLSIDCCSWEGI) is N-cap. Residues 45-707 (VCNLQDRESL…AKENDELNRT (663 aa)) lie on the Extracellular side of the membrane. Residues asparagine 60 and asparagine 71 are each glycosylated (N-linked (GlcNAc...) asparagine). 20 LRR repeats span residues 89-113 (DSHVTVISLPSRGLSGTLASSVQNI), 114-137 (HRLSRLDLSYNRLSGPLPPGFFST), 139-163 (DQLMILNLSYNSFNGELPLEQAFGN), 168-193 (FFSIQTLDLSSNLLEGEILRSSVYLQ), 195-219 (TINLISFNVSNNSFTGPIPSFMCRS), 220-244 (SPQLSKLDFSYNDFSGHISQELGRC), 245-268 (LRLTVLQAGFNNLSGVIPSEIYNL), 269-292 (SELEQLFLPANQLTGKIDNNITRL), 293-316 (RKLTSLALYSNHLEGEIPMDIGNL), 317-340 (SSLRSLQLHINNINGTVPLSLANC), 342-364 (KLVKLNLRVNQLGGGLTELEFSQ), 365-389 (LQSLKVLDLGNNSFTGALPDKIFSC), 391-413 (SLTAIRFAGNKLTGEISPQVLEL), 414-437 (ESLSFMGLSDNKLTNITGALSILQ), 439-464 (CRKLSTLILAKNFYDETVPSKEDFLS), 468-492 (FPKLRIFGVGACRLRGEIPAWLINL), 493-515 (NKVEVMDLSMNRFVGSIPGWLGT), 516-540 (LPDLFYLDLSDNLLTGELPKELFQL), 542-560 (ALMSQKITENNYLELPIFL), and 561-584 (NPNNVTTNQQYNKLYSFPPTIYIR). 2 N-linked (GlcNAc...) asparagine glycosylation sites follow: asparagine 145 and asparagine 163. N-linked (GlcNAc...) asparagine glycans are attached at residues asparagine 202 and asparagine 205. N-linked (GlcNAc...) asparagine glycans are attached at residues asparagine 256, asparagine 267, asparagine 288, asparagine 315, asparagine 330, and asparagine 339. N-linked (GlcNAc...) asparagine glycosylation occurs at asparagine 375. Asparagine 428 is a glycosylation site (N-linked (GlcNAc...) asparagine). Residues asparagine 564, asparagine 587, asparagine 611, asparagine 622, asparagine 635, asparagine 657, and asparagine 705 are each glycosylated (N-linked (GlcNAc...) asparagine). 3 LRR repeats span residues 599-623 (LKVLHILELLGNNLSGSIPDELSNL), 624-647 (TNLERLDLSNNNLSGSIPWSLTNL), and 649-672 (FLSYFNVANNSLEGPIPSEGQFDT). A C-cap/acidic domain region spans residues 690 to 707 (LTSCKPTRAKENDELNRT). The helical transmembrane segment at 708-728 (FLMGIAIGYFLSFVSILVVRA) threads the bilayer. A topological domain (cytoplasmic) is located at residue tryptophan 729.

This sequence belongs to the RLP family.

Its subcellular location is the cell membrane. Functionally, involved in the perception of CLV3 and CLV3-like peptides, that act as extracellular signals regulating meristems maintenance. In Arabidopsis thaliana (Mouse-ear cress), this protein is Receptor-like protein 2.